We begin with the raw amino-acid sequence, 129 residues long: Small ribosomal subunit protein uS11 (129 aa).

Belongs to the universal ribosomal protein uS11 family. Part of the 30S ribosomal subunit. Interacts with proteins S7 and S18. Binds to IF-3.

Functionally, located on the platform of the 30S subunit, it bridges several disparate RNA helices of the 16S rRNA. Forms part of the Shine-Dalgarno cleft in the 70S ribosome. This chain is Small ribosomal subunit protein uS11, found in Cereibacter sphaeroides (strain ATCC 17025 / ATH 2.4.3) (Rhodobacter sphaeroides).